A 178-amino-acid polypeptide reads, in one-letter code: Large ribosomal subunit protein uL6 (178 aa).

The protein belongs to the universal ribosomal protein uL6 family. In terms of assembly, part of the 50S ribosomal subunit.

Functionally, this protein binds to the 23S rRNA, and is important in its secondary structure. It is located near the subunit interface in the base of the L7/L12 stalk, and near the tRNA binding site of the peptidyltransferase center. This Leuconostoc mesenteroides subsp. mesenteroides (strain ATCC 8293 / DSM 20343 / BCRC 11652 / CCM 1803 / JCM 6124 / NCDO 523 / NBRC 100496 / NCIMB 8023 / NCTC 12954 / NRRL B-1118 / 37Y) protein is Large ribosomal subunit protein uL6.